The following is a 392-amino-acid chain: DNA replication and repair protein RecF (392 aa).

Position 33–40 (Gly33–Thr40) interacts with ATP.

This sequence belongs to the RecF family.

It is found in the cytoplasm. The RecF protein is involved in DNA metabolism; it is required for DNA replication and normal SOS inducibility. RecF binds preferentially to single-stranded, linear DNA. It also seems to bind ATP. The protein is DNA replication and repair protein RecF of Caulobacter sp. (strain K31).